Reading from the N-terminus, the 259-residue chain is Ribosomal RNA small subunit methyltransferase A (259 aa).

Positions 12, 14, 39, 60, 84, and 102 each coordinate S-adenosyl-L-methionine.

This sequence belongs to the class I-like SAM-binding methyltransferase superfamily. rRNA adenine N(6)-methyltransferase family. RsmA subfamily.

Its subcellular location is the cytoplasm. The catalysed reaction is adenosine(1518)/adenosine(1519) in 16S rRNA + 4 S-adenosyl-L-methionine = N(6)-dimethyladenosine(1518)/N(6)-dimethyladenosine(1519) in 16S rRNA + 4 S-adenosyl-L-homocysteine + 4 H(+). In terms of biological role, specifically dimethylates two adjacent adenosines (A1518 and A1519) in the loop of a conserved hairpin near the 3'-end of 16S rRNA in the 30S particle. May play a critical role in biogenesis of 30S subunits. This chain is Ribosomal RNA small subunit methyltransferase A, found in Nitrosospira multiformis (strain ATCC 25196 / NCIMB 11849 / C 71).